Consider the following 309-residue polypeptide: 4-hydroxy-3-methylbut-2-enyl diphosphate reductase (309 aa).

A [4Fe-4S] cluster-binding site is contributed by Cys12. 2 residues coordinate (2E)-4-hydroxy-3-methylbut-2-enyl diphosphate: His43 and His77. His43 and His77 together coordinate dimethylallyl diphosphate. Isopentenyl diphosphate is bound by residues His43 and His77. Position 99 (Cys99) interacts with [4Fe-4S] cluster. Position 127 (His127) interacts with (2E)-4-hydroxy-3-methylbut-2-enyl diphosphate. A dimethylallyl diphosphate-binding site is contributed by His127. His127 contributes to the isopentenyl diphosphate binding site. Glu129 functions as the Proton donor in the catalytic mechanism. A (2E)-4-hydroxy-3-methylbut-2-enyl diphosphate-binding site is contributed by Thr167. Position 197 (Cys197) interacts with [4Fe-4S] cluster. Ser225, Ser226, Asn227, and Ser269 together coordinate (2E)-4-hydroxy-3-methylbut-2-enyl diphosphate. Positions 225, 226, 227, and 269 each coordinate dimethylallyl diphosphate. Isopentenyl diphosphate contacts are provided by Ser225, Ser226, Asn227, and Ser269.

Belongs to the IspH family. The cofactor is [4Fe-4S] cluster.

The catalysed reaction is isopentenyl diphosphate + 2 oxidized [2Fe-2S]-[ferredoxin] + H2O = (2E)-4-hydroxy-3-methylbut-2-enyl diphosphate + 2 reduced [2Fe-2S]-[ferredoxin] + 2 H(+). It carries out the reaction dimethylallyl diphosphate + 2 oxidized [2Fe-2S]-[ferredoxin] + H2O = (2E)-4-hydroxy-3-methylbut-2-enyl diphosphate + 2 reduced [2Fe-2S]-[ferredoxin] + 2 H(+). It functions in the pathway isoprenoid biosynthesis; dimethylallyl diphosphate biosynthesis; dimethylallyl diphosphate from (2E)-4-hydroxy-3-methylbutenyl diphosphate: step 1/1. Its pathway is isoprenoid biosynthesis; isopentenyl diphosphate biosynthesis via DXP pathway; isopentenyl diphosphate from 1-deoxy-D-xylulose 5-phosphate: step 6/6. Catalyzes the conversion of 1-hydroxy-2-methyl-2-(E)-butenyl 4-diphosphate (HMBPP) into a mixture of isopentenyl diphosphate (IPP) and dimethylallyl diphosphate (DMAPP). Acts in the terminal step of the DOXP/MEP pathway for isoprenoid precursor biosynthesis. This Wolbachia pipientis wMel protein is 4-hydroxy-3-methylbut-2-enyl diphosphate reductase.